The primary structure comprises 161 residues: Carboxysome assembly protein CcmN (161 aa).

The tract at residues 111 to 140 (LLSAETPPTTATVSSSEPAGRSPQSSAIAH) is disordered. Residues 116-137 (TPPTTATVSSSEPAGRSPQSSA) are compositionally biased toward polar residues. The Encapsulation peptide signature appears at 144 to 161 (VYGKEQFLRMRQSMFPDR).

It belongs to the CcmN family. As to quaternary structure, interacts with CcmM via the N-terminus of CcmN. Interacts with CcmK2 via the 18 C-terminal residues.

The protein localises to the carboxysome. Functionally, required for carboxysome formation; the N-terminus interacts with CcmM which itself binds RuBisCO (ribulose bisphosphate carboxylase, rbcL-rbcS), while the C-terminal 18 residues interact with carboxysome shell protein CcmK2. Required for growth in normal air. In terms of biological role, beta-carboxysome assembly initiates when soluble RuBisCO is condensed into a liquid matrix in a pre-carboxysome by the RbcS-like domains of probably both CcmM58 and CcmM35. CcmN interacts with the N-terminus of CcmM58, and then recruits the CcmK2 major shell protein via CcmN's encapsulation peptide. Shell formation requires CcmK proteins and CcmO. CcmL caps the otherwise elongated carboxysome. Once fully encapsulated carboxysomes are formed, they migrate within the cell probably via interactions with the cytoskeleton. This Synechococcus elongatus (strain ATCC 33912 / PCC 7942 / FACHB-805) (Anacystis nidulans R2) protein is Carboxysome assembly protein CcmN.